We begin with the raw amino-acid sequence, 264 residues long: MKIEAVIFDWAGTTVDYGCFAPLEVFMKIFQKRGVEITAEEARKPMGLLKIDHVRALTEMPRIADEWKRVFGQLPTEADIHEMYEEFEEILFSILPSYATPIDGVKEVIASLRERGIKIGSTTGYTREMMEIVAKEAALQGYKPDFLVTPDDVPAGRPYPWMCYKNAMELGVYPMNHMIKVGDTVSDMKEGRNAGMWTVGVILGSSELGLTQYEVESMDSVELREKIEIVRNRFAENGAHSTIETMQELENVMEHIEKQELIIS.

D9 (nucleophile) is an active-site residue. 2 residues coordinate Mg(2+): D9 and A11. The active-site Schiff-base intermediate with substrate is the K50. D183 is a binding site for Mg(2+).

Belongs to the HAD-like hydrolase superfamily. PhnX family. As to quaternary structure, homodimer. Mg(2+) serves as cofactor.

The catalysed reaction is phosphonoacetaldehyde + H2O = acetaldehyde + phosphate + H(+). Its function is as follows. Involved in phosphonate degradation. The sequence is that of Phosphonoacetaldehyde hydrolase from Bacillus cereus (strain ATCC 14579 / DSM 31 / CCUG 7414 / JCM 2152 / NBRC 15305 / NCIMB 9373 / NCTC 2599 / NRRL B-3711).